We begin with the raw amino-acid sequence, 242 residues long: Vacuole localized DSC protein 1 (242 aa).

The next 2 membrane-spanning stretches (helical) occupy residues 128 to 148 (PYGFVIMLLIREFTCPVPTAF) and 152 to 172 (LLLVLLDILLLFCQIVIINGS).

In terms of assembly, part of the vacuole-localized DSC E3 ligase complex composed of at least TUL1, DSC2, DSC3, UBX3, CDC48 and VLD1.

It localises to the vacuole membrane. In terms of biological role, component of the vacuole-localized DSC E3 ubiquitin ligase complex involved in the targeting of the complex to the vacuole membrane via the AP3 pathway to ubiquinate vacuolar membrane proteins. Competes with GLD1 to determine the subcellular localizations of the DSC complex. The chain is Vacuole localized DSC protein 1 from Saccharomyces cerevisiae (strain ATCC 204508 / S288c) (Baker's yeast).